The sequence spans 378 residues: Response regulator aspartate phosphatase A (378 aa).

TPR repeat units lie at residues 101–137, 148–181, 183–215, 222–255, 261–294, and 336–369; these read YYFN…VSDD, AEIF…TVRR, QCEF…AKKE, SSAL…CKSE, PHSI…ARQY, and EELA…QKQI.

This sequence belongs to the Rap family. In terms of assembly, homodimer. Interacts with its substrate, phosphorylated Spo0F, and its inhibitor, the PhrA pentapeptide. The RapA dimer forms a stable complex with two molecules of phosphorylated Spo0F. The complex is dissociated after dephosphorylation of Spo0F by RapA. Mn(2+) serves as cofactor.

The protein localises to the cytoplasm. Its activity is regulated as follows. Phosphatase activity is inhibited by the phosphatase regulator PhrA. Interaction with PhrA dissociates the RapA-Spo0F complex. Activity is abolished in the presence of EDTA. Functionally, involved in the regulation of sporulation. Acts as a phosphatase that specifically dephosphorylates the sporulation initiation phosphotransferase Spo0F and inhibits its activity. This Bacillus subtilis (strain 168) protein is Response regulator aspartate phosphatase A.